The sequence spans 260 residues: MVLNINSFYKNCRGEFMRAVFIYHKNNQRMEKFYKNLLNEPDFCRICDDCYNCRGNWTFKNNVKNIVIEEVYEEFVDNPYDYLPELPEGDICIAQLHEDLLYELPLLLKEKGYKALIVPSETPHDLSLALRRDLKRVCSNYNIEFENPKPFCSLEKKEGNEYINKFIDYFKIGKPELEIEVENGLIKDVKVKISAPCGETYYIAKRLKGKAIDDLKEEIANAHHNYPCLASMEMDKELGDTILHKAGYIAFEVVEKALKK.

It functions in the pathway pyrimidine metabolism; dTTP biosynthesis. Is able to catalyze the biosynthesis of dTMP using dUMP, tetrahydrofolate and formaldehyde in vitro, i.e. a reaction equivalent to that catalyzed by bacterial thymidylate synthases (EC 2.1.1.45). However, M.jannaschii like most methanogenic Archaea lacks folates, thus the physiological cosubstrate is unknown but is likely one of the non-methylated methanopterin biosynthetic intermediates. This Methanocaldococcus jannaschii (strain ATCC 43067 / DSM 2661 / JAL-1 / JCM 10045 / NBRC 100440) (Methanococcus jannaschii) protein is Thymidylate synthase.